A 364-amino-acid chain; its full sequence is Protein IncC (364 aa).

3 stretches are compositionally biased toward basic and acidic residues: residues 1–10, 26–42, and 89–100; these read MGVIHEETAY, ADHRDSAGRLSRWEATG, and HRPEVGSGRQEK. Disordered stretches follow at residues 1–63 and 75–102; these read MGVI…ASRV and VRAGNGGSAGTSGVHRPEVGSGRQEKTG.

It belongs to the ParA family.

Functionally, this is one of the proteins encoded by the trfB operon; it is involved in plasmid maintenance and replication. This Escherichia coli protein is Protein IncC (incC).